The following is a 498-amino-acid chain: Myocyte-specific enhancer factor 2A (498 aa).

An MADS-box domain is found at 3–57; sequence RKKIQITRIMDERNRQVTFTKRKFGLMKKAYELSVLCDCEIALIIFNSSNKLFQY. The mef2-type DNA-binding region spans 58 to 86; sequence ASTDMDKVLLKYTEYNEPHESRTNSDIVE. Ser59 bears the Phosphoserine; by CK2 mark. 2 positions are modified to phosphoserine: Ser98 and Ser108. Ser108 is modified (phosphothreonine). The interval 172–220 is disordered; the sequence is LADSSMLSPPPATLHRNVSPGAPQRPPSTGSASGMLSTTDLTVPNGAGN. Residues 198–220 are compositionally biased toward polar residues; that stretch reads PSTGSASGMLSTTDLTVPNGAGN. Ser233 carries the post-translational modification Phosphoserine. The interval 240–268 is disordered; sequence TGANSLGKVMPTKSPPPPGGGSLGMNSRK. The residue at position 247 (Lys247) is an N6-acetyllysine. Ser253 is subject to Phosphoserine. Residues 264-281 are required for interaction with MAPKs; sequence MNSRKPDLRVVIPPSSKG. A beta domain region spans residues 287–294; the sequence is SEEEELEL. Phosphothreonine; by MAPK7 is present on residues Thr310 and Thr317. Thr310 carries the phosphothreonine; by NLK modification. At Ser353 the chain carries Phosphoserine; by MAPK7. Positions 388-400 are enriched in polar residues; it reads SNLSINTNQNINI. The tract at residues 388-498 is disordered; it reads SNLSINTNQN…KRMRMDTWVT (111 aa). Residue Lys401 is modified to N6-acetyllysine; alternate. Lys401 is covalently cross-linked (Glycyl lysine isopeptide (Lys-Gly) (interchain with G-Cter in SUMO); alternate). Ser406 is modified (phosphoserine). Position 413 is a phosphothreonine (Thr413). Positions 426–436 are enriched in pro residues; sequence QQPPPQPPQPQ. At Ser444 the chain carries Phosphoserine. The span at 444–457 shows a compositional bias: low complexity; it reads SPVDSLSSSSSSYD. Basic and acidic residues-rich tracts occupy residues 458–468 and 479–498; these read GSDREDPRGDF and NTED…TWVT.

This sequence belongs to the MEF2 family. As to quaternary structure, binds DNA as a homo- or heterodimer. Dimerizes with MEF2D. Interacts with HDAC7. Interacts with PIAS1; the interaction enhances sumoylation. Interacts with HDAC4, HDAC9 and SLC2A4RG. Interacts (via the N-terminal) with MAPK7; the interaction results in the phosphorylation and transcriptional activity of MEF2A. In terms of processing, constitutive phosphorylation on Ser-406 promotes Lys-401 sumoylation thus preventing acetylation at this site. Dephosphorylation on Ser-406 by PPP3CA upon neuron depolarization promotes a switch from sumoylation to acetylation on residue Lys-403 leading to inhibition of dendrite claw differentiation. Phosphorylation on Thr-312 and Thr-319 are the main sites involved in p38 MAPK signaling and activate transcription. Phosphorylated on these sites by MAPK14/p38alpha and MAPK11/p38beta, but not by MAPK13/p38delta nor by MAPK12/p38gamma. Phosphorylation on Ser-408 by CDK5 induced by neurotoxicity inhibits MEF2A transcriptional activation leading to apoptosis of cortical neurons. Phosphorylation on Thr-312, Thr-319 and Ser-355 can be induced by EGF. Isoform 3 is phosphorylated on Ser-98 and Thr-108. Post-translationally, sumoylation on Lys-401 is enhanced by PIAS1 and represses transcriptional activity. Phosphorylation on Ser-406 is required for sumoylation. Has no effect on nuclear location nor on DNA binding. Sumoylated with SUMO1 and, to a lesser extent with SUMO2 and SUMO3. PIASx facilitates sumoylation in postsynaptic dendrites in the cerebellar cortex and promotes their morphogenesis. Acetylation on Lys-401 activates transcriptional activity. Acetylated by p300 on several sites in diffentiating myocytes. Acetylation on Lys-4 increases DNA binding and transactivation. Hyperacetylation by p300 leads to enhanced cardiac myocyte growth and heart failure. In terms of processing, proteolytically cleaved in cerebellar granule neurons on several sites by caspase 3 and caspase 7 following neurotoxicity. Preferentially cleaves the CDK5-mediated hyperphosphorylated form which leads to neuron apoptosis and transcriptional inactivation. As to expression, widely expressed though mainly restricted to skeletal and cardiac muscle, brain, neurons and lymphocytes. Differentially expressed depending on if isoforms contain the beta domain or not, with the total expression of the beta domain-lacking isoforms vastly exceeding that of the beta domain-containing isoforms. Isoforms containing the beta domain are expressed primarily in skeletal and cardiac muscle and in brain. Also present in lung and testis. Splicing to include the beta domain is induced in differentiating myocytes. Isoforms lacking the beta domain are expressed less abundantly in skeletal muscle, brain and lymphocytes, and are uniquely found in ovary, liver, spleen and kidney. In embryos, the beta domain-containing and beta domain-lacking isoforms are equally expressed. Also expressed cerebellar granule neurons and other regions of the CNS. Highest levels in the olfactory bulb, cortex, hippocampus, thalamus and cerebellum.

It localises to the nucleus. Its function is as follows. Transcriptional activator which binds specifically to the MEF2 element, 5'-YTA[AT](4)TAR-3', found in numerous muscle-specific genes. Also involved in the activation of numerous growth factor- and stress-induced genes. Mediates cellular functions not only in skeletal and cardiac muscle development, but also in neuronal differentiation and survival. Plays diverse roles in the control of cell growth, survival and apoptosis via p38 MAPK signaling in muscle-specific and/or growth factor-related transcription. In cerebellar granule neurons, phosphorylated and sumoylated MEF2A represses transcription of NUR77 promoting synaptic differentiation. Associates with chromatin to the ZNF16 promoter. The chain is Myocyte-specific enhancer factor 2A (Mef2a) from Mus musculus (Mouse).